A 342-amino-acid polypeptide reads, in one-letter code: Glycerol-3-phosphate dehydrogenase [NAD(P)+] (342 aa).

Tryptophan 11, arginine 33, and lysine 107 together coordinate NADPH. Sn-glycerol 3-phosphate contacts are provided by lysine 107, glycine 143, and serine 145. Alanine 147 contributes to the NADPH binding site. Sn-glycerol 3-phosphate-binding residues include lysine 198, aspartate 251, serine 261, arginine 262, and asparagine 263. The active-site Proton acceptor is the lysine 198. Arginine 262 serves as a coordination point for NADPH. 2 residues coordinate NADPH: valine 286 and glutamate 288.

It belongs to the NAD-dependent glycerol-3-phosphate dehydrogenase family.

It is found in the cytoplasm. It catalyses the reaction sn-glycerol 3-phosphate + NAD(+) = dihydroxyacetone phosphate + NADH + H(+). The catalysed reaction is sn-glycerol 3-phosphate + NADP(+) = dihydroxyacetone phosphate + NADPH + H(+). The protein operates within membrane lipid metabolism; glycerophospholipid metabolism. Its function is as follows. Catalyzes the reduction of the glycolytic intermediate dihydroxyacetone phosphate (DHAP) to sn-glycerol 3-phosphate (G3P), the key precursor for phospholipid synthesis. This Paracidovorax citrulli (strain AAC00-1) (Acidovorax citrulli) protein is Glycerol-3-phosphate dehydrogenase [NAD(P)+].